Reading from the N-terminus, the 120-residue chain is Large ribosomal subunit protein uL14 (120 aa).

This sequence belongs to the universal ribosomal protein uL14 family. As to quaternary structure, part of the 50S ribosomal subunit. Forms a cluster with proteins L3 and L19. In the 70S ribosome, L14 and L19 interact and together make contacts with the 16S rRNA in bridges B5 and B8.

Functionally, binds to 23S rRNA. Forms part of two intersubunit bridges in the 70S ribosome. This chain is Large ribosomal subunit protein uL14, found in Karelsulcia muelleri (strain GWSS) (Sulcia muelleri).